Consider the following 449-residue polypeptide: Monoacylglycerol lipase (449 aa).

Lys82 participates in a covalent cross-link: Glycyl lysine isopeptide (Lys-Gly) (interchain with G-Cter in ubiquitin). Positions 151-392 (PMLIILHGLT…LLLETSTGGH (242 aa)) constitute an AB hydrolase-1 domain. The GXSXG motif lies at 230–234 (GFSLG). Catalysis depends on Ser232, which acts as the Nucleophile. Catalysis depends on charge relay system residues Asp364 and His392.

It belongs to the AB hydrolase superfamily. AB hydrolase 4 family.

The enzyme catalyses Hydrolyzes glycerol monoesters of long-chain fatty acids.. It catalyses the reaction 1-hexadecanoylglycerol + H2O = glycerol + hexadecanoate + H(+). It carries out the reaction 1-octadecanoylglycerol + H2O = octadecanoate + glycerol + H(+). The catalysed reaction is 1-(9Z-octadecenoyl)-glycerol + H2O = glycerol + (9Z)-octadecenoate + H(+). Functionally, converts monoacylglycerides (MAG) to free fatty acids and glycerol. Has a preference for palmitoyl-MAG. Does not play a significant role in ethyl ester biosynthesis. Also possesses ester hydrolase and low but persistent TAG lipase activity. This Saccharomyces cerevisiae (strain ATCC 204508 / S288c) (Baker's yeast) protein is Monoacylglycerol lipase.